Reading from the N-terminus, the 494-residue chain is MNPKVEYKQIQSHDEAENQVLQHECHQAKARKYYRCAVVIAIIITLLFCVLASQLLLFPLFSITSQTTTEIVLNKDIQCDDQCRFVLVESIPEGLVYDANATINPSIFQSWLNILTSAKSSVDIASFYWTLTNEDTQTQEPSAHQGELILQELLNLKQRGVSVRVAVNPPDSPLRAKDISALKDSGADVRVVDLPKLTDGVLHTKFWVVDSEHFYIGSANMDWRSLTQVKELGATIYNCSCLAEDLKKIFEAYWILGLPNATLPSPWPVNYSTPYNKDTPMQVMLNSTASQVYISSSPPPLSATGRTDDLQSIINIIDDAKKFVYISVMDYSPTEEFSHPRRYWPYIDNHLRKAVYERNVNVRLLISCWQNSRPSMFTFLRSLAALHSNKSHYNIEVKIFVVPATEVQKKIPYARVNHNKYMVTDRVAYIGTSNWSGDYFIHTAGSALIVNQTQSVGTSDTIQMQLQAVFERDWNSNYSRTFNTLSSWKEKCIF.

At 1–37 (MNPKVEYKQIQSHDEAENQVLQHECHQAKARKYYRCA) the chain is on the cytoplasmic side. The chain crosses the membrane as a helical; Signal-anchor for type II membrane protein span at residues 38–58 (VVIAIIITLLFCVLASQLLLF). Topologically, residues 59–494 (PLFSITSQTT…LSSWKEKCIF (436 aa)) are lumenal. Residue Asn-100 is glycosylated (N-linked (GlcNAc...) asparagine). Residues 198–225 (TDGVLHTKFWVVDSEHFYIGSANMDWRS) enclose the PLD phosphodiesterase 1 domain. Catalysis depends on residues His-203, Lys-205, and Asp-210. Residues Asn-238, Asn-260, Asn-270, Asn-286, and Asn-389 are each glycosylated (N-linked (GlcNAc...) asparagine). One can recognise a PLD phosphodiesterase 2 domain in the interval 413–439 (YARVNHNKYMVTDRVAYIGTSNWSGDY). Residues His-418, Lys-420, and Asp-425 contribute to the active site. N-linked (GlcNAc...) asparagine glycans are attached at residues Asn-434, Asn-451, and Asn-477.

The protein belongs to the phospholipase D family. N-glycosylated. In terms of processing, proteolytically processed to a soluble form that is stable within endosomes and lysosomes. During transport through the secretory pathway becomes proteolysed by cysteine proteases, thereby releasing a stable soluble lysosomal lumenal polypeptide, whereas the transmembrane-bound fragment is rapidly degraded. Its transport route to lysosomes involves ubiquitination and the ESCRT complex. Post-translationally, ubiquitinated. Ubiquitination mediates sorting into lysosomes.

The protein resides in the endoplasmic reticulum membrane. Its subcellular location is the lysosome lumen. It localises to the early endosome membrane. The protein localises to the late endosome membrane. It is found in the golgi apparatus membrane. The protein resides in the endosome membrane. The enzyme catalyses Exonucleolytic cleavage in the 5'- to 3'-direction to yield nucleoside 3'-phosphates.. Its function is as follows. 5'-&gt;3' DNA exonuclease which digests single-stranded DNA (ssDNA). Regulates inflammatory cytokine responses via the degradation of nucleic acids, by reducing the concentration of ssDNA able to stimulate TLR9, a nucleotide-sensing receptor in collaboration with PLD4. May be important in myotube formation. Plays a role in lysosomal homeostasis. Involved in the regulation of endosomal protein sorting. The polypeptide is 5'-3' exonuclease PLD3 (pld3) (Xenopus tropicalis (Western clawed frog)).